Reading from the N-terminus, the 524-residue chain is Cytochrome P450 6k1 (524 aa).

Cys464 is a binding site for heme.

This sequence belongs to the cytochrome P450 family. Heme is required as a cofactor.

It localises to the endoplasmic reticulum membrane. It is found in the microsome membrane. In Blattella germanica (German cockroach), this protein is Cytochrome P450 6k1 (CYP6K1).